Consider the following 492-residue polypeptide: Trigger factor (492 aa).

The 86-residue stretch at 164–249 (GDLVVVDFVG…VSDVRVPRKA (86 aa)) folds into the PPIase FKBP-type domain. Residues 440–492 (EAEEDSIGKHDHDHDHKEKASDKPKAKKAAAPKKKAAPKKKAAPKAEKKSSDE) form a disordered region. Positions 445–463 (SIGKHDHDHDHKEKASDKP) are enriched in basic and acidic residues. The span at 464–482 (KAKKAAAPKKKAAPKKKAA) shows a compositional bias: basic residues. The span at 483 to 492 (PKAEKKSSDE) shows a compositional bias: basic and acidic residues.

This sequence belongs to the FKBP-type PPIase family. Tig subfamily.

The protein resides in the cytoplasm. The enzyme catalyses [protein]-peptidylproline (omega=180) = [protein]-peptidylproline (omega=0). Its function is as follows. Involved in protein export. Acts as a chaperone by maintaining the newly synthesized protein in an open conformation. Functions as a peptidyl-prolyl cis-trans isomerase. The polypeptide is Trigger factor (Zymomonas mobilis subsp. mobilis (strain ATCC 31821 / ZM4 / CP4)).